A 280-amino-acid polypeptide reads, in one-letter code: Succinate dehydrogenase [ubiquinone] iron-sulfur subunit 2, mitochondrial (280 aa).

A mitochondrion-targeting transit peptide spans 1 to 28 (MAFGLIGRVVGTKSSRLSTAARLIPARW). The 2Fe-2S ferredoxin-type domain maps to 51 to 140 (FQIYRWNPDN…ETTITPLPHM (90 aa)). Residues Cys101, Cys106, and Cys121 each coordinate [2Fe-2S] cluster. In terms of domain architecture, 4Fe-4S ferredoxin-type spans 183–213 (DRAKLDGMYECILCACCSTSCPSYWWNPESY). Positions 193, 196, and 199 each coordinate [4Fe-4S] cluster. Residue Cys203 participates in [3Fe-4S] cluster binding. Trp208 contributes to the a ubiquinone binding site. [3Fe-4S] cluster is bound by residues Cys250 and Cys256. Cys260 lines the [4Fe-4S] cluster pocket.

This sequence belongs to the succinate dehydrogenase/fumarate reductase iron-sulfur protein family. Component of complex II composed of eight subunits in plants: four classical SDH subunits SDH1, SDH2, SDH3 and SDH4 (a flavoprotein (FP), an iron-sulfur protein (IP), and a cytochrome b composed of a large and a small subunit.), as well as four subunits unknown in mitochondria from bacteria and heterotrophic eukaryotes. [2Fe-2S] cluster is required as a cofactor. [3Fe-4S] cluster serves as cofactor. It depends on [4Fe-4S] cluster as a cofactor. As to expression, ubiquitous. Preferentially expressed in flowers, inflorescences and root tips.

The protein resides in the mitochondrion inner membrane. The enzyme catalyses a quinone + succinate = fumarate + a quinol. Its pathway is carbohydrate metabolism; tricarboxylic acid cycle; fumarate from succinate (eukaryal route): step 1/1. In terms of biological role, iron-sulfur protein (IP) subunit of succinate dehydrogenase (SDH) that is involved in complex II of the mitochondrial electron transport chain and is responsible for transferring electrons from succinate to ubiquinone (coenzyme Q). This Arabidopsis thaliana (Mouse-ear cress) protein is Succinate dehydrogenase [ubiquinone] iron-sulfur subunit 2, mitochondrial (SDH2-2).